A 230-amino-acid chain; its full sequence is Terminal protein (230 aa).

The Nuclear localization signal signature appears at 222–230 (RRRKKRGKK).

The protein localises to the host nucleus. Its subcellular location is the virion. Its function is as follows. DNA terminal protein is linked to the 5'-ends of both strands of the genome through a phosphodiester bond between the beta-hydroxyl group of a threonine residue and the 5'-phosphate of the terminal deoxyadenylate. This protein is essential for DNA replication and is involved in the priming of DNA elongation. In Streptococcus pneumoniae (Bacteriophage Cp-1), this protein is Terminal protein (4).